A 214-amino-acid polypeptide reads, in one-letter code: Pyridoxine/pyridoxamine 5'-phosphate oxidase (214 aa).

Substrate contacts are provided by residues 8–11 (RINY) and lysine 66. Residues 61–66 (RIVLVK), 76–77 (FT), arginine 82, lysine 83, and glutamine 105 each bind FMN. Residues tyrosine 123, arginine 127, and serine 131 each coordinate substrate. FMN-binding positions include 140-141 (QS) and tryptophan 184. 190 to 192 (RLH) contributes to the substrate binding site. Arginine 194 lines the FMN pocket.

The protein belongs to the pyridoxamine 5'-phosphate oxidase family. As to quaternary structure, homodimer. The cofactor is FMN.

It catalyses the reaction pyridoxamine 5'-phosphate + O2 + H2O = pyridoxal 5'-phosphate + H2O2 + NH4(+). It carries out the reaction pyridoxine 5'-phosphate + O2 = pyridoxal 5'-phosphate + H2O2. The protein operates within cofactor metabolism; pyridoxal 5'-phosphate salvage; pyridoxal 5'-phosphate from pyridoxamine 5'-phosphate: step 1/1. It functions in the pathway cofactor metabolism; pyridoxal 5'-phosphate salvage; pyridoxal 5'-phosphate from pyridoxine 5'-phosphate: step 1/1. Functionally, catalyzes the oxidation of either pyridoxine 5'-phosphate (PNP) or pyridoxamine 5'-phosphate (PMP) into pyridoxal 5'-phosphate (PLP). The polypeptide is Pyridoxine/pyridoxamine 5'-phosphate oxidase (Burkholderia multivorans (strain ATCC 17616 / 249)).